Here is an 842-residue protein sequence, read N- to C-terminus: Histidine biosynthesis trifunctional protein (842 aa).

Residues 1 to 275 are phosphoribosyl-AMP cyclohydrolase; the sequence is MTFPLLPAYA…FVVEQTGVGF (275 aa). Residues 276-357 are phosphoribosyl-ATP pyrophosphohydrolase; the sequence is CHLERTSCFG…FYFALVRCAK (82 aa). A histidinol dehydrogenase region spans residues 358-842; sequence YGVTLDEVER…KVRMEKLGLI (485 aa). Residues 380 to 403 form a disordered region; it reads KGDAKPGYTKEQPKEESKPKEVPS. The span at 390-403 shows a compositional bias: basic and acidic residues; the sequence is EQPKEESKPKEVPS. Positions 667 and 670 each coordinate Zn(2+). Catalysis depends on residues Glu-736 and His-737. 2 residues coordinate Zn(2+): Asp-769 and His-828.

This sequence in the C-terminal section; belongs to the histidinol dehydrogenase family. Zn(2+) serves as cofactor.

The catalysed reaction is 1-(5-phospho-beta-D-ribosyl)-5'-AMP + H2O = 1-(5-phospho-beta-D-ribosyl)-5-[(5-phospho-beta-D-ribosylamino)methylideneamino]imidazole-4-carboxamide. It carries out the reaction 1-(5-phospho-beta-D-ribosyl)-ATP + H2O = 1-(5-phospho-beta-D-ribosyl)-5'-AMP + diphosphate + H(+). It catalyses the reaction L-histidinol + 2 NAD(+) + H2O = L-histidine + 2 NADH + 3 H(+). It functions in the pathway amino-acid biosynthesis; L-histidine biosynthesis; L-histidine from 5-phospho-alpha-D-ribose 1-diphosphate: step 2/9. It participates in amino-acid biosynthesis; L-histidine biosynthesis; L-histidine from 5-phospho-alpha-D-ribose 1-diphosphate: step 3/9. The protein operates within amino-acid biosynthesis; L-histidine biosynthesis; L-histidine from 5-phospho-alpha-D-ribose 1-diphosphate: step 9/9. The sequence is that of Histidine biosynthesis trifunctional protein (HIS4) from Komagataella pastoris (Yeast).